Reading from the N-terminus, the 380-residue chain is Putative glutamate--cysteine ligase 2-1 (380 aa).

It belongs to the glutamate--cysteine ligase type 2 family. YbdK subfamily.

The enzyme catalyses L-cysteine + L-glutamate + ATP = gamma-L-glutamyl-L-cysteine + ADP + phosphate + H(+). In terms of biological role, ATP-dependent carboxylate-amine ligase which exhibits weak glutamate--cysteine ligase activity. This Mycolicibacterium vanbaalenii (strain DSM 7251 / JCM 13017 / BCRC 16820 / KCTC 9966 / NRRL B-24157 / PYR-1) (Mycobacterium vanbaalenii) protein is Putative glutamate--cysteine ligase 2-1.